A 275-amino-acid chain; its full sequence is Arylalkylamine N-acetyltransferase 1 (275 aa).

Acetyl-CoA is bound by residues 181–183 and 189–193; these read LSV and GLGIA. Residues 181–254 enclose the N-acetyltransferase domain; sequence LSVDTNYRGL…GEVVFKPAAP (74 aa).

The protein belongs to the acetyltransferase family. AANAT subfamily. In the adult, expressed in the midgut portion of the thoracic segments and the frontal half of the abdomen (at protein level). Expressed in the epithelial cell layer facing the lumen of the gut (at protein level). In the brain, expressed in a sub-populations of neurons and astrocytes, and in a set of distinct stripes in the optic lobes (at protein level). Expressed mainly in serotonergic neurons but also in subsets of glutamatergic, GABAergic and cholinergic neurons (at protein level).

Its subcellular location is the cytoplasm. It is found in the nucleus. It catalyses the reaction a 2-arylethylamine + acetyl-CoA = an N-acetyl-2-arylethylamine + CoA + H(+). It carries out the reaction serotonin + acetyl-CoA = N-acetylserotonin + CoA + H(+). The enzyme catalyses dopamine + acetyl-CoA = N-acetyldopamine + CoA + H(+). The catalysed reaction is tyramine + acetyl-CoA = N-acetyltyramine + CoA + H(+). It catalyses the reaction octopamine + acetyl-CoA = N-acetyloctopamine + CoA + H(+). It carries out the reaction 5-methoxytryptamine + acetyl-CoA = melatonin + CoA + H(+). The enzyme catalyses 2-phenylethylamine + acetyl-CoA = N-(2-phenylethyl)acetamide + CoA + H(+). The catalysed reaction is noradrenaline + acetyl-CoA = N-acetylnoradrenaline + CoA + H(+). It catalyses the reaction tyramine + butanoyl-CoA = N-butanoyltyramine + CoA + H(+). It carries out the reaction tyramine + hexanoyl-CoA = N-hexanoyltyramine + CoA + H(+). The enzyme catalyses tryptamine + acetyl-CoA = N-acetyltryptamine + CoA + H(+). The catalysed reaction is dopamine + hexadecanoyl-CoA = N-hexadecanoyl-dopamine + CoA + H(+). It catalyses the reaction dopamine + (9Z)-octadecenoyl-CoA = N-(9Z-octadecanoyl)-dopamine + CoA + H(+). It carries out the reaction serotonin + hexadecanoyl-CoA = N-hexadecanoyl-serotonin + CoA + H(+). The enzyme catalyses serotonin + (9Z)-octadecenoyl-CoA = N-(9Z-octadecenoyl)-serotonin + CoA + H(+). The catalysed reaction is serotonin + octadecanoyl-CoA = N-octadecanoyl-serotonin + CoA + H(+). It catalyses the reaction serotonin + (5Z,8Z,11Z,14Z)-eicosatetraenoyl-CoA = N-[(5Z,8Z,11Z,14Z)-eicosatetraenoyl]-serotonin + CoA + H(+). It functions in the pathway aromatic compound metabolism; melatonin biosynthesis; melatonin from serotonin: step 1/2. Its activity is regulated as follows. Inhibited by long-chain acyl-CoA thioesters, oleoyl-CoA (an analog of acetyl-CoA) and tyrosol (an analog of tyramine). Catalyzes N-acetylation of tryptamine, tyramine, dopamine, serotonin and octopamine. In astrocytes, regulates sleep homeostasis by limiting the accumulation of serotonin and dopamine in the brain upon sleep deprivation. Is not essential for sclerotization. The sequence is that of Arylalkylamine N-acetyltransferase 1 from Drosophila melanogaster (Fruit fly).